Consider the following 86-residue polypeptide: MHAYVYKSQRKQDTFVYLATRDDFSGLPAAVQAQLAPLTFVLDVALTPERRLAQADAATVREALGKHGFYLQLPKTIVLAGECDHD.

One can recognise a YcgL domain in the interval 1 to 83; it reads MHAYVYKSQR…PKTIVLAGEC (83 aa).

The sequence is that of YcgL domain-containing protein XCV4171 from Xanthomonas euvesicatoria pv. vesicatoria (strain 85-10) (Xanthomonas campestris pv. vesicatoria).